We begin with the raw amino-acid sequence, 492 residues long: Glutamate--tRNA ligase (492 aa).

Positions 13–23 (PSPTGTPHVGM) match the 'HIGH' region motif. Residues 257–261 (KLSKR) carry the 'KMSKS' region motif. Lys-260 contributes to the ATP binding site.

It belongs to the class-I aminoacyl-tRNA synthetase family. Glutamate--tRNA ligase type 1 subfamily. As to quaternary structure, monomer.

The protein localises to the cytoplasm. The enzyme catalyses tRNA(Glu) + L-glutamate + ATP = L-glutamyl-tRNA(Glu) + AMP + diphosphate. Its function is as follows. Catalyzes the attachment of glutamate to tRNA(Glu) in a two-step reaction: glutamate is first activated by ATP to form Glu-AMP and then transferred to the acceptor end of tRNA(Glu). The sequence is that of Glutamate--tRNA ligase from Mycolicibacterium paratuberculosis (strain ATCC BAA-968 / K-10) (Mycobacterium paratuberculosis).